Here is a 119-residue protein sequence, read N- to C-terminus: Ribonuclease P protein component (119 aa).

The protein belongs to the RnpA family. Consists of a catalytic RNA component (M1 or rnpB) and a protein subunit.

The catalysed reaction is Endonucleolytic cleavage of RNA, removing 5'-extranucleotides from tRNA precursor.. Its function is as follows. RNaseP catalyzes the removal of the 5'-leader sequence from pre-tRNA to produce the mature 5'-terminus. It can also cleave other RNA substrates such as 4.5S RNA. The protein component plays an auxiliary but essential role in vivo by binding to the 5'-leader sequence and broadening the substrate specificity of the ribozyme. The polypeptide is Ribonuclease P protein component (Listeria welshimeri serovar 6b (strain ATCC 35897 / DSM 20650 / CCUG 15529 / CIP 8149 / NCTC 11857 / SLCC 5334 / V8)).